Here is a 1149-residue protein sequence, read N- to C-terminus: MASFKRDLYLFLAVFLSISGVWSFSELFFIKEPHDVTAMRRDAVVLDCQAHGEAPIGIRWLKNGVTITESERVYSLSNGSLLISEVESRKDKSDEGFYQCLAQNKYGSILSQRARLTIASLSTFTQQPASIIVMEGSVARFTCKITATPPPIITWEFNRVTLPLATERITVLPSGVLQIQGVEQRDAGSYRCVAANIVSRRRSTEATLTVTPAMSPRAPQRPRIIAGPQNLTVPAHSTALLECMASGNPRPLISWSRADHKSIDVHKTKVLGNGNLIISDVNPQHAGIYFCRATTPGTRNYTIAAANITVLAPPSLVEWPESVTRPRAGTARFVCTAEGFPTPQITWLKNGEPVRSNGRIKMYNSKLVINQIIPEDDGIYQCEAENIQGSVLAMARLIVVMSDNRPSAPRNIRADTVSSSAIVLAWDRPAYNSEKVIAYSVHYMKAEGLNNEEYQIVIGNDTTRYIIDDLEAGRNYTFYIVAYMPMGASRMSDHVIQHTLEDVPLRAPELSLTSRSPSDIQVSWQPLSHKLSRGRVSAYRLSYRTSSDGTLTQLELSAHKTHQLLEGLQPDTTYLLRIAAATAVGWGEPSAWSSHRTPKASSTKVPLAPELQLESLNCTTVTLRWHLPAGSSSGLQGFKLSYHEEGQSEAAQAQIPPHHRQHTIGGLDPRKKYHIKLLAFSFMGDGYQADQTISTPGCVSVRDRLVPPPPPPHHVYAHSNSSSSVFLHWARPAFTSAQTLNYTVRCNPVGLQNASLVLYLQTAAQSLLVTDLEPNTNYEFAVRLHVDLLSSPWSPVVYQTTLPEAPSRAPVGVKVTLIEGDSALVSWKAPDDRSAAAVTHYTVLYATRRAWAAGDWQMLQREGSITMALLENLQPGQVYLVQVSASNQMGDGPFSAAVELTIHTDGHAHRTHGFSHATVFSDGFYHLDQRSMAGIAVGVCIALTCIIICILILACRSKTRKSCTTKSIRQAGGQTPPTAVRLANESAAESVEVMMPMMRDHFIDAKGGTNLIINSYGPVKPNIEKKRRKRWSFFKKNEKEVKKVSSPAYSYHPGTTLLCYTETSPENPPTTLQGLFGPSGGDSEGSHSSEGSHETSDSGRYSHDDTEATNVSIRSRPASLQDDGNQTPVHEKQLETTLQEQEMTDLHPV.

The first 23 residues, 1–23 (MASFKRDLYLFLAVFLSISGVWS), serve as a signal peptide directing secretion. Residues 24-932 (FSELFFIKEP…GFYHLDQRSM (909 aa)) lie on the Extracellular side of the membrane. Ig-like domains follow at residues 27 to 117 (LFFI…ARLT), 122 to 209 (STFT…ATLT), 222 to 309 (PRII…ANIT), and 314 to 399 (PSLV…RLIV). 2 disulfides stabilise this stretch: Cys-48–Cys-100 and Cys-143–Cys-192. The N-linked (GlcNAc...) asparagine glycan is linked to Asn-78. N-linked (GlcNAc...) asparagine glycosylation occurs at Asn-230. Cys-243 and Cys-291 form a disulfide bridge. Asn-300 and Asn-307 each carry an N-linked (GlcNAc...) asparagine glycan. Cys-335 and Cys-382 form a disulfide bridge. Fibronectin type-III domains lie at 408-502 (APRN…TLED), 504-600 (PLRA…TPKA), 605-704 (VPLA…VRDR), 711-804 (PPHH…TLPE), and 809-905 (APVG…IHTD). N-linked (GlcNAc...) asparagine glycosylation is found at Asn-460 and Asn-475. Asn-617 carries N-linked (GlcNAc...) asparagine glycosylation. The segment at 646 to 666 (GQSEAAQAQIPPHHRQHTIGG) is disordered. Asn-720, Asn-741, and Asn-753 each carry an N-linked (GlcNAc...) asparagine glycan. Residues 933–953 (AGIAVGVCIALTCIIICILIL) traverse the membrane as a helical segment. Over 954–1149 (ACRSKTRKSC…EQEMTDLHPV (196 aa)) the chain is Cytoplasmic. The disordered stretch occupies residues 1060 to 1149 (YTETSPENPP…EQEMTDLHPV (90 aa)). Positions 1061 to 1073 (TETSPENPPTTLQ) are enriched in polar residues. The span at 1084 to 1106 (EGSHSSEGSHETSDSGRYSHDDT) shows a compositional bias: basic and acidic residues.

Belongs to the immunoglobulin superfamily. DCC family. In terms of tissue distribution, expression begins in the posterior region of the embryo and this posterior restriction persists at the 4 s stage. At early somite stages, expressed along the neural tube with lower levels in the lateral and paraxial mesoderm. Expression decreases caudally and rostrally becomes restricted to the ventral part of the brain. Widespread in the spinal cord at 30 hours post-fertilization (hpf) and is also expressed in the lens from this time. At 40 hpf, expression is restricted to the lens.

The protein resides in the membrane. In terms of biological role, may play a role in anteroposterior axis elongation. This Danio rerio (Zebrafish) protein is Protogenin A.